We begin with the raw amino-acid sequence, 156 residues long: MILTVKPLQGKECSVQVTEDEKVSTVKELVSERLNIPANQQRLLYKGKALSDEHRLSDYSIGPEAKLNLVIRPVGERTGASGTAASSSSSSQGRVWQTVSTILARHFSPADAAKVHEQLIKDYERSLRQLSLDDIERLAGRLLHPDGEGMDTSYMD.

Positions methionine 1–glutamate 76 constitute a Ubiquitin-like domain.

Component of the bag6/bat3 complex.

Its subcellular location is the cytoplasm. The protein localises to the cytosol. It is found in the nucleus. As part of a cytosolic protein quality control complex, the bag6/bat3 complex, maintains misfolded and hydrophobic patches-containing proteins in a soluble state and participates in their proper delivery to the endoplasmic reticulum or alternatively can promote their sorting to the proteasome where they undergo degradation. The bag6/bat3 complex is involved in the post-translational delivery of tail-anchored/type II transmembrane proteins to the endoplasmic reticulum membrane. Similarly, the bag6/bat3 complex also functions as a sorting platform for proteins of the secretory pathway that are mislocalized to the cytosol either delivering them to the proteasome for degradation or to the endoplasmic reticulum. The bag6/bat3 complex also plays a role in the endoplasmic reticulum-associated degradation (ERAD), a quality control mechanism that eliminates unwanted proteins of the endoplasmic reticulum through their retrotranslocation to the cytosol and their targeting to the proteasome. It maintains these retrotranslocated proteins in an unfolded yet soluble state condition in the cytosol to ensure their proper delivery to the proteasome. In Anoplopoma fimbria (Sablefish), this protein is Ubiquitin-like protein 4A (ubl4a).